We begin with the raw amino-acid sequence, 124 residues long: Small ribosomal subunit protein uS12cz/uS12cy (124 aa).

Belongs to the universal ribosomal protein uS12 family. As to quaternary structure, part of the 30S ribosomal subunit.

The protein resides in the plastid. Functionally, with S4 and S5 plays an important role in translational accuracy. Located at the interface of the 30S and 50S subunits. The chain is Small ribosomal subunit protein uS12cz/uS12cy (rps12-A) from Epifagus virginiana (Beechdrops).